A 213-amino-acid chain; its full sequence is Imidazole glycerol phosphate synthase subunit HisH 2 (213 aa).

One can recognise a Glutamine amidotransferase type-1 domain in the interval 4-211 (RLGLIDYGMG…LNWLETGAKP (208 aa)). Catalysis depends on cysteine 82, which acts as the Nucleophile. Catalysis depends on residues histidine 186 and glutamate 188.

As to quaternary structure, heterodimer of HisH and HisF.

The protein resides in the cytoplasm. The enzyme catalyses 5-[(5-phospho-1-deoxy-D-ribulos-1-ylimino)methylamino]-1-(5-phospho-beta-D-ribosyl)imidazole-4-carboxamide + L-glutamine = D-erythro-1-(imidazol-4-yl)glycerol 3-phosphate + 5-amino-1-(5-phospho-beta-D-ribosyl)imidazole-4-carboxamide + L-glutamate + H(+). The catalysed reaction is L-glutamine + H2O = L-glutamate + NH4(+). It functions in the pathway amino-acid biosynthesis; L-histidine biosynthesis; L-histidine from 5-phospho-alpha-D-ribose 1-diphosphate: step 5/9. IGPS catalyzes the conversion of PRFAR and glutamine to IGP, AICAR and glutamate. The HisH subunit provides the glutamine amidotransferase activity that produces the ammonia necessary to HisF for the synthesis of IGP and AICAR. In Prochlorococcus marinus (strain MIT 9313), this protein is Imidazole glycerol phosphate synthase subunit HisH 2 (hisH2).